Consider the following 343-residue polypeptide: Uroporphyrinogen decarboxylase (343 aa).

Residues 23-27 (RQAGR), Asp-73, Tyr-150, Ser-205, and His-322 each bind substrate.

This sequence belongs to the uroporphyrinogen decarboxylase family. As to quaternary structure, homodimer.

The protein localises to the cytoplasm. The enzyme catalyses uroporphyrinogen III + 4 H(+) = coproporphyrinogen III + 4 CO2. It participates in porphyrin-containing compound metabolism; protoporphyrin-IX biosynthesis; coproporphyrinogen-III from 5-aminolevulinate: step 4/4. Its function is as follows. Catalyzes the decarboxylation of four acetate groups of uroporphyrinogen-III to yield coproporphyrinogen-III. The chain is Uroporphyrinogen decarboxylase from Cereibacter sphaeroides (strain ATCC 17029 / ATH 2.4.9) (Rhodobacter sphaeroides).